The following is a 336-amino-acid chain: HTH-type transcriptional repressor PurR (336 aa).

An HTH lacI-type domain is found at 2 to 56 (ATIKDVAKMAGVSTTTVSHVINKTRFVAKDTEEAVLSAIKQLNYSPSAVARSLKV). Positions 4 to 23 (IKDVAKMAGVSTTTVSHVIN) form a DNA-binding region, H-T-H motif. A DNA-binding region spans residues 48–56 (SAVARSLKV). Hypoxanthine-binding residues include Tyr-73, Lys-188, Thr-190, Phe-219, and Asp-273.

As to quaternary structure, homodimer.

The protein operates within purine metabolism; purine nucleotide biosynthesis [regulation]. In terms of biological role, is the main repressor of the genes involved in the de novo synthesis of purine nucleotides, regulating purB, purC, purEK, purF, purHD, purL, purMN and guaBA expression. PurR is allosterically activated to bind its cognate DNA by binding the purine corepressors, hypoxanthine or guanine, thereby effecting transcription repression. This Haemophilus influenzae (strain 86-028NP) protein is HTH-type transcriptional repressor PurR.